The sequence spans 430 residues: Probable aspartic-type endopeptidase ARB_07403 (430 aa).

Positions 1–17 are cleaved as a signal peptide; it reads MHVSTLLVAVLLPLALS. A propeptide spans 18–87 (activation peptide); that stretch reads KPTPRKKTGS…SKATAGSGKE (70 aa). The disordered stretch occupies residues 66-105; the sequence is YHPQHISKLPGNSKATAGSGKEGVESQDEKGEVVNNPTNH. Residues 87–97 show a composition bias toward basic and acidic residues; sequence EGVESQDEKGE. The Peptidase A1 domain maps to 109-427; the sequence is FLSPVTIGGQ…DQRGPSISLA (319 aa). The active site involves Asp125. A glycan (N-linked (GlcNAc...) asparagine) is linked at Asn306. The active site involves Asp314.

It belongs to the peptidase A1 family.

Its subcellular location is the secreted. Functionally, probable secreted aspartic-type endopeptidase which contributes to virulence. This chain is Probable aspartic-type endopeptidase ARB_07403, found in Arthroderma benhamiae (strain ATCC MYA-4681 / CBS 112371) (Trichophyton mentagrophytes).